Consider the following 147-residue polypeptide: D-aminoacyl-tRNA deacylase (147 aa).

The Gly-cisPro motif, important for rejection of L-amino acids signature appears at 136–137 (GP).

This sequence belongs to the DTD family. Homodimer.

The protein resides in the cytoplasm. The catalysed reaction is glycyl-tRNA(Ala) + H2O = tRNA(Ala) + glycine + H(+). It catalyses the reaction a D-aminoacyl-tRNA + H2O = a tRNA + a D-alpha-amino acid + H(+). An aminoacyl-tRNA editing enzyme that deacylates mischarged D-aminoacyl-tRNAs. Also deacylates mischarged glycyl-tRNA(Ala), protecting cells against glycine mischarging by AlaRS. Acts via tRNA-based rather than protein-based catalysis; rejects L-amino acids rather than detecting D-amino acids in the active site. By recycling D-aminoacyl-tRNA to D-amino acids and free tRNA molecules, this enzyme counteracts the toxicity associated with the formation of D-aminoacyl-tRNA entities in vivo and helps enforce protein L-homochirality. This is D-aminoacyl-tRNA deacylase from Nitratiruptor sp. (strain SB155-2).